We begin with the raw amino-acid sequence, 220 residues long: MAKQEYKQLPKRAEVHSATEQFKDTIKTSLGLDLFKGLGLTIKEFFSPSVTIHYPMEQLPLSPRYRAVHHLQRLLDSGSERCIGCGLCEKICTSNCIRIITHKGEDNRKKIDSYTINLGRCIYCGLCAEVCPELAIVMGNRFENASTQRSQYGSKSEFLTNEQDAKNCSHAEFLGFGAVSPNYNERMQATPLDYVQEPSKEESKEETPTNPESNKGDENV.

4Fe-4S ferredoxin-type domains are found at residues 71–102 (LQRL…IITH) and 112–141 (DSYT…MGNR). [4Fe-4S] cluster contacts are provided by C82, C85, C88, C92, C121, C124, C127, and C131. Residues 187–220 (MQATPLDYVQEPSKEESKEETPTNPESNKGDENV) are disordered. Over residues 198–207 (PSKEESKEET) the composition is skewed to basic and acidic residues.

The protein belongs to the complex I 23 kDa subunit family. In terms of assembly, NDH-1 is composed of 14 different subunits. Subunits NuoA, H, J, K, L, M, N constitute the membrane sector of the complex. [4Fe-4S] cluster is required as a cofactor.

The protein resides in the cell inner membrane. The catalysed reaction is a quinone + NADH + 5 H(+)(in) = a quinol + NAD(+) + 4 H(+)(out). NDH-1 shuttles electrons from NADH, via FMN and iron-sulfur (Fe-S) centers, to quinones in the respiratory chain. The immediate electron acceptor for the enzyme in this species is believed to be ubiquinone. Couples the redox reaction to proton translocation (for every two electrons transferred, four hydrogen ions are translocated across the cytoplasmic membrane), and thus conserves the redox energy in a proton gradient. This is NADH-quinone oxidoreductase subunit I from Helicobacter pylori (strain HPAG1).